We begin with the raw amino-acid sequence, 363 residues long: MTLQRTPLHDLAIAAGAKFVPFSGWEMAVQYKGLKVEHQAVRTEVGMFDISHMGKFQLAGENLIAAMQKLVPSNLARLAPGQAQYTVLLNDHGGIIDDVIYYHQGDRQGFLIVNAATTQKDWDWLTHHLTAQGITLTDVSQENILLAIQGPQAEKALQPVVENLDLATLKLFNHGQGQIFGETAFIARTGYTGEDGFEVMVAPTAGKKLWSALIDAGVMPCGLGARDTLRLEAGLHLYGQDMDDDTTPLEAGLGWLIHWQEKDAFIAKDILQTQKAAGVQRRLVGLEMQGRGIARHDYSVLVNGEAVGLVTSGTMSPTLEKAIALAYLPLEFSKVGQAVTVEIRGKQYPAQVVKKPFYRASKK.

This sequence belongs to the GcvT family. As to quaternary structure, the glycine cleavage system is composed of four proteins: P, T, L and H.

It catalyses the reaction N(6)-[(R)-S(8)-aminomethyldihydrolipoyl]-L-lysyl-[protein] + (6S)-5,6,7,8-tetrahydrofolate = N(6)-[(R)-dihydrolipoyl]-L-lysyl-[protein] + (6R)-5,10-methylene-5,6,7,8-tetrahydrofolate + NH4(+). In terms of biological role, the glycine cleavage system catalyzes the degradation of glycine. The protein is Aminomethyltransferase of Picosynechococcus sp. (strain ATCC 27264 / PCC 7002 / PR-6) (Agmenellum quadruplicatum).